The following is a 302-amino-acid chain: Geranylgeranyl diphosphate synthase (302 aa).

Residues Lys-53, Arg-56, and His-87 each contribute to the isopentenyl diphosphate site. Mg(2+)-binding residues include Asp-94 and Asp-100. A (2E,6E)-farnesyl diphosphate-binding site is contributed by Arg-105. Position 106 (Arg-106) interacts with isopentenyl diphosphate. 3 residues coordinate (2E,6E)-farnesyl diphosphate: Lys-189, Thr-190, and Gln-227.

This sequence belongs to the FPP/GGPP synthase family. Mg(2+) is required as a cofactor.

The enzyme catalyses isopentenyl diphosphate + (2E,6E)-farnesyl diphosphate = (2E,6E,10E)-geranylgeranyl diphosphate + diphosphate. It participates in isoprenoid biosynthesis; geranylgeranyl diphosphate biosynthesis; geranylgeranyl diphosphate from farnesyl diphosphate and isopentenyl diphosphate: step 1/1. In terms of biological role, catalyzes the condensation of farnesyl diphosphate (FPP) and isopentenyl diphosphate (IPP) to yield geranylgeranyl diphosphate (GGPP) needed for biosynthesis of carotenoids and diterpenes. The sequence is that of Geranylgeranyl diphosphate synthase (crtE) from Pantoea ananas (Erwinia uredovora).